The sequence spans 455 residues: Bifunctional protein GlmU (455 aa).

Positions 1-226 (MALNVVILAA…AIEVEGANNR (226 aa)) are pyrophosphorylase. Residues 8 to 11 (LAAG), Lys-22, Gln-73, 78 to 79 (GT), 100 to 102 (YGD), Gly-137, Glu-151, Asn-166, and Asn-224 each bind UDP-N-acetyl-alpha-D-glucosamine. Mg(2+) is bound at residue Asp-102. Asn-224 provides a ligand contact to Mg(2+). The interval 227–247 (VQLAQLERAYQARAAEKLMLE) is linker. Residues 248–455 (GANLRDPARL…WARPVKKPKS (208 aa)) form an N-acetyltransferase region. Residues Arg-330 and Lys-348 each coordinate UDP-N-acetyl-alpha-D-glucosamine. His-360 acts as the Proton acceptor in catalysis. Residues Tyr-363 and Asn-374 each coordinate UDP-N-acetyl-alpha-D-glucosamine. Residues Ala-377, 383 to 384 (NY), Ser-402, Ala-420, and Arg-437 contribute to the acetyl-CoA site.

This sequence in the N-terminal section; belongs to the N-acetylglucosamine-1-phosphate uridyltransferase family. It in the C-terminal section; belongs to the transferase hexapeptide repeat family. Homotrimer. The cofactor is Mg(2+).

Its subcellular location is the cytoplasm. It carries out the reaction alpha-D-glucosamine 1-phosphate + acetyl-CoA = N-acetyl-alpha-D-glucosamine 1-phosphate + CoA + H(+). The catalysed reaction is N-acetyl-alpha-D-glucosamine 1-phosphate + UTP + H(+) = UDP-N-acetyl-alpha-D-glucosamine + diphosphate. It participates in nucleotide-sugar biosynthesis; UDP-N-acetyl-alpha-D-glucosamine biosynthesis; N-acetyl-alpha-D-glucosamine 1-phosphate from alpha-D-glucosamine 6-phosphate (route II): step 2/2. It functions in the pathway nucleotide-sugar biosynthesis; UDP-N-acetyl-alpha-D-glucosamine biosynthesis; UDP-N-acetyl-alpha-D-glucosamine from N-acetyl-alpha-D-glucosamine 1-phosphate: step 1/1. The protein operates within bacterial outer membrane biogenesis; LPS lipid A biosynthesis. Its function is as follows. Catalyzes the last two sequential reactions in the de novo biosynthetic pathway for UDP-N-acetylglucosamine (UDP-GlcNAc). The C-terminal domain catalyzes the transfer of acetyl group from acetyl coenzyme A to glucosamine-1-phosphate (GlcN-1-P) to produce N-acetylglucosamine-1-phosphate (GlcNAc-1-P), which is converted into UDP-GlcNAc by the transfer of uridine 5-monophosphate (from uridine 5-triphosphate), a reaction catalyzed by the N-terminal domain. The protein is Bifunctional protein GlmU of Shewanella sediminis (strain HAW-EB3).